A 188-amino-acid chain; its full sequence is Elongation factor P (188 aa).

K34 bears the N6-(3,6-diaminohexanoyl)-5-hydroxylysine mark.

This sequence belongs to the elongation factor P family. In terms of processing, may be beta-lysylated on the epsilon-amino group of Lys-34 by the combined action of EpmA and EpmB, and then hydroxylated on the C5 position of the same residue by EpmC (if this protein is present). Lysylation is critical for the stimulatory effect of EF-P on peptide-bond formation. The lysylation moiety may extend toward the peptidyltransferase center and stabilize the terminal 3-CCA end of the tRNA. Hydroxylation of the C5 position on Lys-34 may allow additional potential stabilizing hydrogen-bond interactions with the P-tRNA.

The protein resides in the cytoplasm. The protein operates within protein biosynthesis; polypeptide chain elongation. Its function is as follows. Involved in peptide bond synthesis. Alleviates ribosome stalling that occurs when 3 or more consecutive Pro residues or the sequence PPG is present in a protein, possibly by augmenting the peptidyl transferase activity of the ribosome. Modification of Lys-34 is required for alleviation. This is Elongation factor P from Haemophilus influenzae (strain PittGG).